A 151-amino-acid chain; its full sequence is UPF0178 protein YaiI (151 aa).

Belongs to the UPF0178 family.

This chain is UPF0178 protein YaiI, found in Salmonella agona (strain SL483).